Reading from the N-terminus, the 374-residue chain is Alanine racemase (374 aa).

The active-site Proton acceptor; specific for D-alanine is the Lys-35. Position 35 is an N6-(pyridoxal phosphate)lysine (Lys-35). Residue Arg-130 participates in substrate binding. The active-site Proton acceptor; specific for L-alanine is the Tyr-253. Met-305 contacts substrate.

Belongs to the alanine racemase family. Pyridoxal 5'-phosphate serves as cofactor.

The catalysed reaction is L-alanine = D-alanine. It participates in amino-acid biosynthesis; D-alanine biosynthesis; D-alanine from L-alanine: step 1/1. Catalyzes the interconversion of L-alanine and D-alanine. May also act on other amino acids. The chain is Alanine racemase (alr) from Ralstonia pickettii (strain 12J).